A 439-amino-acid polypeptide reads, in one-letter code: uncharacterized protein (439 aa).

Residue 28 to 35 (GRRRIGKT) coordinates ATP.

This is an uncharacterized protein from Methanocaldococcus jannaschii (strain ATCC 43067 / DSM 2661 / JAL-1 / JCM 10045 / NBRC 100440) (Methanococcus jannaschii).